A 292-amino-acid polypeptide reads, in one-letter code: AKT-interacting protein (292 aa).

Residues 1–64 (MNPFWNMSSA…ISPSPSVQPT (64 aa)) are disordered. Residues 14–23 (KRSDNDEKIA) are compositionally biased toward basic and acidic residues. Residues 75 to 223 (YLEYSLLAEF…VVDSVKLCNS (149 aa)) enclose the UBC core domain. Residues 273–292 (SWVKPGSVLPFSKEENSLQT) form a disordered region.

This sequence belongs to the ubiquitin-conjugating enzyme family. FTS subfamily.

It localises to the cytoplasm. Its subcellular location is the cell membrane. Its function is as follows. May function to promote vesicle trafficking and/or fusion. May also regulate apoptosis. The chain is AKT-interacting protein (aktip) from Xenopus tropicalis (Western clawed frog).